The following is a 706-amino-acid chain: Elongation factor G (706 aa).

The region spanning 8–297 (SYVRNIGIGA…AVVDYLPSPN (290 aa)) is the tr-type G domain. GTP contacts are provided by residues 17–24 (AHIDAGKT), 95–99 (DTPGH), and 149–152 (NKMD).

It belongs to the TRAFAC class translation factor GTPase superfamily. Classic translation factor GTPase family. EF-G/EF-2 subfamily.

Its subcellular location is the cytoplasm. In terms of biological role, catalyzes the GTP-dependent ribosomal translocation step during translation elongation. During this step, the ribosome changes from the pre-translocational (PRE) to the post-translocational (POST) state as the newly formed A-site-bound peptidyl-tRNA and P-site-bound deacylated tRNA move to the P and E sites, respectively. Catalyzes the coordinated movement of the two tRNA molecules, the mRNA and conformational changes in the ribosome. In Orientia tsutsugamushi (strain Boryong) (Rickettsia tsutsugamushi), this protein is Elongation factor G.